The following is a 1050-amino-acid chain: Self-sufficient cytochrome P450 monooxygenase CYP505E3 (1050 aa).

C406 provides a ligand contact to heme. The segment covering 459 to 481 (RGQSATGLSQGSMSASGATSSVA) has biased composition (polar residues). Residues 459-495 (RGQSATGLSQGSMSASGATSSVASPGPPAATGAQSNP) form a disordered region. The region spanning 501 to 641 (ISFFYGSNSG…DLELWEETNL (141 aa)) is the Flavodoxin-like domain. Residues 507 to 511 (SNSGT) and 585 to 617 (VFGCGHHDWAKTFYRIPILIDDLMHKAGATRLT) each bind FMN. The 229-residue stretch at 679 to 907 (RGLVEAKVTA…RPAKDAFHLP (229 aa)) folds into the FAD-binding FR-type domain.

In the N-terminal section; belongs to the cytochrome P450 family. Requires FAD as cofactor. FMN serves as cofactor. Heme is required as a cofactor.

It carries out the reaction 2 oxidized [cytochrome P450] + NADPH = 2 reduced [cytochrome P450] + NADP(+) + H(+). The catalysed reaction is an organic molecule + reduced [NADPH--hemoprotein reductase] + O2 = an alcohol + oxidized [NADPH--hemoprotein reductase] + H2O + H(+). It catalyses the reaction decane + reduced [NADPH--hemoprotein reductase] + O2 = 3-decanol + oxidized [NADPH--hemoprotein reductase] + H2O + H(+). The enzyme catalyses dodecane + reduced [NADPH--hemoprotein reductase] + O2 = 5-dodecanol + oxidized [NADPH--hemoprotein reductase] + H2O + H(+). It carries out the reaction tetradecane + reduced [NADPH--hemoprotein reductase] + O2 = 7-tetradecanol + oxidized [NADPH--hemoprotein reductase] + H2O + H(+). The catalysed reaction is hexadecane + reduced [NADPH--hemoprotein reductase] + O2 = 9-hexadecanol + oxidized [NADPH--hemoprotein reductase] + H2O + H(+). It catalyses the reaction dodecanoate + reduced [NADPH--hemoprotein reductase] + O2 = 5-hydroxydodecanoate + oxidized [NADPH--hemoprotein reductase] + H2O + H(+). The enzyme catalyses tetradecanoate + reduced [NADPH--hemoprotein reductase] + O2 = 7-hydroxytetradecanoate + oxidized [NADPH--hemoprotein reductase] + H2O + H(+). It carries out the reaction hexadecanoate + reduced [NADPH--hemoprotein reductase] + O2 = 9-hydroxyhexadecanoate + oxidized [NADPH--hemoprotein reductase] + H2O + H(+). The catalysed reaction is decan-1-ol + reduced [NADPH--hemoprotein reductase] + O2 = 1,3-decanediol + oxidized [NADPH--hemoprotein reductase] + H2O + H(+). It catalyses the reaction decan-1-ol + reduced [NADPH--hemoprotein reductase] + O2 = 1,7-decanediol + oxidized [NADPH--hemoprotein reductase] + H2O + H(+). The enzyme catalyses dodecan-1-ol + reduced [NADPH--hemoprotein reductase] + O2 = 1,5-dodecanediol + oxidized [NADPH--hemoprotein reductase] + H2O + H(+). It carries out the reaction dodecan-1-ol + reduced [NADPH--hemoprotein reductase] + O2 = 1,4-dodecanediol + oxidized [NADPH--hemoprotein reductase] + H2O + H(+). The catalysed reaction is dodecan-1-ol + reduced [NADPH--hemoprotein reductase] + O2 = 1,6-dodecanediol + oxidized [NADPH--hemoprotein reductase] + H2O + H(+). In terms of biological role, self-sufficient cytochrome P450 monooxygenase that catalyzes the regioselective in-chain hydroxylation of alkanes, fatty alcohols, and fatty acids at the omega-7 position. Performs hydroxylation of C10-C16 n-alkanes and C12 and C14 fatty alcohols; and thereby enables the one step biocatalytic synthesis of rare alcohols such as 5-dodecanol and 7-tetradecanol. Converts 1-dodecanol into 1,5-dodecanediol as major product with very little sub-terminally hydroxylated products with the 1,4-dodecanediol and 1,6-dodecanediol more abundant. Does not use hexadecanediol nor decanoic acid as substrates. Converts dodecanoic acid to 5-hydroxydodecanoic acid which can be further converted into delta-dodecalactone by lactonization of the 5-hydroxy acid at low pH. Also gives sub-terminal hydroxylation of dodecanoic acid with 9-hydroxydodecanoic acid being the second most abundant product. The C14 and C16 fatty acids are double hydroxylated to yield dihydroxy acids hydroxylated at both the omega-7 position and a sub-terminal position (omega-1, omega-2, or omega-3). The protein is Self-sufficient cytochrome P450 monooxygenase CYP505E3 of Aspergillus terreus (strain NIH 2624 / FGSC A1156).